A 287-amino-acid chain; its full sequence is UBX domain-containing protein 1 (287 aa).

The UBA domain occupies 1–42 (MAECSTLESLIEMGFSPSRAEKALAATGNQGIEPAMDWLVEH). Residues 44 to 207 (DDPDIDEPSV…VQEPPTKKEY (164 aa)) are disordered. Basic and acidic residues-rich tracts occupy residues 72-114 (CEER…EQEK) and 129-169 (KIQE…ERAR). Residues 72–164 (CEERLPLTEE…RVREKIARDK (93 aa)) are a coiled coil. Residues 176-197 (SEPISPPAEASIPATTPSPSSP) are compositionally biased toward low complexity. Positions 205-284 (KEYDQCRIQV…GLVPSAVLIV (80 aa)) constitute a UBX domain.

The protein resides in the cytoplasm. In terms of biological role, component of a complex required to couple deglycosylation and proteasome-mediated degradation of misfolded proteins in the endoplasmic reticulum that are retrotranslocated in the cytosol. Involved in ubiquitin-proteasome systems. This Xenopus tropicalis (Western clawed frog) protein is UBX domain-containing protein 1 (ubxn1).